We begin with the raw amino-acid sequence, 433 residues long: GTPase Obg (433 aa).

Residues 1–159 enclose the Obg domain; it reads MAITDYCECR…LNVSLEVKYL (159 aa). An OBG-type G domain is found at 160 to 329; sequence ANVGIVGFPN…LLDRVFELYN (170 aa). Residues 166-173, 191-195, 212-215, 282-285, and 310-312 contribute to the GTP site; these read GFPNSGKS, FTTLI, DIPG, NKID, and ISA. Residues Ser173 and Thr193 each coordinate Mg(2+). One can recognise an OCT domain in the interval 355-433; sequence TNENNNDPLN…FDGCEFVIND (79 aa).

The protein belongs to the TRAFAC class OBG-HflX-like GTPase superfamily. OBG GTPase family. As to quaternary structure, monomer. Mg(2+) serves as cofactor.

Its subcellular location is the cytoplasm. An essential GTPase which binds GTP, GDP and possibly (p)ppGpp with moderate affinity, with high nucleotide exchange rates and a fairly low GTP hydrolysis rate. Plays a role in control of the cell cycle, stress response, ribosome biogenesis and in those bacteria that undergo differentiation, in morphogenesis control. The protein is GTPase Obg of Mycoplasma genitalium (strain ATCC 33530 / DSM 19775 / NCTC 10195 / G37) (Mycoplasmoides genitalium).